We begin with the raw amino-acid sequence, 217 residues long: Somatotropin (217 aa).

Positions 1 to 26 (MAPGSWFSPLFIAVITLGLQWPKEAA) are cleaved as a signal peptide. His46 lines the Zn(2+) pocket. A disulfide bridge links Cys79 with Cys190. Glu199 is a binding site for Zn(2+). Cysteines 207 and 215 form a disulfide.

The protein belongs to the somatotropin/prolactin family.

The protein resides in the secreted. Growth hormone plays an important role in growth control. In Struthio camelus (Common ostrich), this protein is Somatotropin (GH).